We begin with the raw amino-acid sequence, 501 residues long: Ribose import ATP-binding protein RbsA (501 aa).

2 consecutive ABC transporter domains span residues 8–245 (LKMV…VGRT) and 255–500 (VKKG…VGIN). An ATP-binding site is contributed by 40-47 (GENGAGKS).

Belongs to the ABC transporter superfamily. Ribose importer (TC 3.A.1.2.1) family. As to quaternary structure, the complex is composed of an ATP-binding protein (RbsA), two transmembrane proteins (RbsC) and a solute-binding protein (RbsB).

The protein localises to the cell membrane. It carries out the reaction D-ribose(out) + ATP + H2O = D-ribose(in) + ADP + phosphate + H(+). In terms of biological role, part of the ABC transporter complex RbsABC involved in ribose import. Responsible for energy coupling to the transport system. The protein is Ribose import ATP-binding protein RbsA of Clostridium perfringens (strain SM101 / Type A).